The chain runs to 281 residues: ATP phosphoribosyltransferase (281 aa).

This sequence belongs to the ATP phosphoribosyltransferase family. Long subfamily. The cofactor is Mg(2+).

Its subcellular location is the cytoplasm. The enzyme catalyses 1-(5-phospho-beta-D-ribosyl)-ATP + diphosphate = 5-phospho-alpha-D-ribose 1-diphosphate + ATP. It participates in amino-acid biosynthesis; L-histidine biosynthesis; L-histidine from 5-phospho-alpha-D-ribose 1-diphosphate: step 1/9. Its activity is regulated as follows. Feedback inhibited by histidine. Its function is as follows. Catalyzes the condensation of ATP and 5-phosphoribose 1-diphosphate to form N'-(5'-phosphoribosyl)-ATP (PR-ATP). Has a crucial role in the pathway because the rate of histidine biosynthesis seems to be controlled primarily by regulation of HisG enzymatic activity. The protein is ATP phosphoribosyltransferase of Natronomonas pharaonis (strain ATCC 35678 / DSM 2160 / CIP 103997 / JCM 8858 / NBRC 14720 / NCIMB 2260 / Gabara) (Halobacterium pharaonis).